Consider the following 144-residue polypeptide: Nucleoside diphosphate kinase (144 aa).

ATP contacts are provided by Lys-11, Phe-59, Arg-87, Thr-93, Arg-104, and Asn-114. His-117 serves as the catalytic Pros-phosphohistidine intermediate.

It belongs to the NDK family. In terms of assembly, homotetramer. Mg(2+) is required as a cofactor.

The protein localises to the cytoplasm. The catalysed reaction is a 2'-deoxyribonucleoside 5'-diphosphate + ATP = a 2'-deoxyribonucleoside 5'-triphosphate + ADP. The enzyme catalyses a ribonucleoside 5'-diphosphate + ATP = a ribonucleoside 5'-triphosphate + ADP. Functionally, major role in the synthesis of nucleoside triphosphates other than ATP. The ATP gamma phosphate is transferred to the NDP beta phosphate via a ping-pong mechanism, using a phosphorylated active-site intermediate. The protein is Nucleoside diphosphate kinase of Aliivibrio salmonicida (strain LFI1238) (Vibrio salmonicida (strain LFI1238)).